The primary structure comprises 717 residues: Fatty acid oxidation complex subunit alpha (717 aa).

The tract at residues 1-189 (MIYQSPTIEV…KVGAIDAVVA (189 aa)) is enoyl-CoA hydratase/isomerase. D296 provides a ligand contact to substrate. The interval 311-717 (KKVNSAAVLG…ANNGSYYQQA (407 aa)) is 3-hydroxyacyl-CoA dehydrogenase. Residues M324, D343, 400-402 (VVE), K407, and S429 each bind NAD(+). H450 (for 3-hydroxyacyl-CoA dehydrogenase activity) is an active-site residue. Residue N453 coordinates NAD(+). Substrate-binding residues include N500 and Y660.

It in the N-terminal section; belongs to the enoyl-CoA hydratase/isomerase family. The protein in the C-terminal section; belongs to the 3-hydroxyacyl-CoA dehydrogenase family. In terms of assembly, heterotetramer of two alpha chains (FadB) and two beta chains (FadA).

The catalysed reaction is a (3S)-3-hydroxyacyl-CoA + NAD(+) = a 3-oxoacyl-CoA + NADH + H(+). It carries out the reaction a (3S)-3-hydroxyacyl-CoA = a (2E)-enoyl-CoA + H2O. It catalyses the reaction a 4-saturated-(3S)-3-hydroxyacyl-CoA = a (3E)-enoyl-CoA + H2O. The enzyme catalyses (3S)-3-hydroxybutanoyl-CoA = (3R)-3-hydroxybutanoyl-CoA. The catalysed reaction is a (3Z)-enoyl-CoA = a 4-saturated (2E)-enoyl-CoA. It carries out the reaction a (3E)-enoyl-CoA = a 4-saturated (2E)-enoyl-CoA. Its pathway is lipid metabolism; fatty acid beta-oxidation. Functionally, involved in the aerobic and anaerobic degradation of long-chain fatty acids via beta-oxidation cycle. Catalyzes the formation of 3-oxoacyl-CoA from enoyl-CoA via L-3-hydroxyacyl-CoA. It can also use D-3-hydroxyacyl-CoA and cis-3-enoyl-CoA as substrate. The protein is Fatty acid oxidation complex subunit alpha of Shewanella pealeana (strain ATCC 700345 / ANG-SQ1).